The chain runs to 335 residues: Fructose-1,6-bisphosphatase class 1 (335 aa).

Residues Glu92, Asp114, Leu116, and Asp117 each contribute to the Mg(2+) site. Substrate is bound by residues 117-120 (DGSS) and Asn209. Residue Glu281 coordinates Mg(2+).

The protein belongs to the FBPase class 1 family. In terms of assembly, homotetramer. Requires Mg(2+) as cofactor.

It is found in the cytoplasm. It carries out the reaction beta-D-fructose 1,6-bisphosphate + H2O = beta-D-fructose 6-phosphate + phosphate. The protein operates within carbohydrate biosynthesis; gluconeogenesis. This Nitrosococcus oceani (strain ATCC 19707 / BCRC 17464 / JCM 30415 / NCIMB 11848 / C-107) protein is Fructose-1,6-bisphosphatase class 1.